A 776-amino-acid polypeptide reads, in one-letter code: Mitochondrial intermediate peptidase (776 aa).

A mitochondrion-targeting transit peptide spans 1–28 (MFVRFYKRLDRQYIQSQRRWILSSNKCL). Residues 48–71 (DHWEESQAQNTSSEQDNKGKNSSY) are disordered. The span at 53 to 71 (SQAQNTSSEQDNKGKNSSY) shows a compositional bias: polar residues. His567 is a binding site for Zn(2+). Glu568 is a catalytic residue. Residues His571 and His574 each coordinate Zn(2+).

The protein belongs to the peptidase M3 family. It depends on Zn(2+) as a cofactor.

The protein resides in the mitochondrion matrix. The enzyme catalyses Release of an N-terminal octapeptide as second stage of processing of some proteins imported into the mitochondrion.. In terms of biological role, cleaves proteins, imported into the mitochondrion, to their mature size. While most mitochondrial precursor proteins are processed to the mature form in one step by mitochondrial processing peptidase (MPP), the sequential cleavage by MIP of an octapeptide after initial processing by MPP is a required step for a subgroup of nuclear-encoded precursor proteins destined for the matrix or the inner membrane. This is Mitochondrial intermediate peptidase (OCT1) from Eremothecium gossypii (strain ATCC 10895 / CBS 109.51 / FGSC 9923 / NRRL Y-1056) (Yeast).